A 333-amino-acid chain; its full sequence is Protein farnesyltransferase/geranylgeranyltransferase type-1 subunit alpha (333 aa).

PFTA repeat units lie at residues L61–V95, D96–P130, A132–G166, W167–V200, and M207–T241.

Belongs to the protein prenyltransferase subunit alpha family. As to quaternary structure, heterodimer of FTA and FTB (farnesyltransferase). Heterodimer of an alpha and a beta subunit. Mg(2+) is required as a cofactor.

It catalyses the reaction L-cysteinyl-[protein] + (2E,6E)-farnesyl diphosphate = S-(2E,6E)-farnesyl-L-cysteinyl-[protein] + diphosphate. It carries out the reaction geranylgeranyl diphosphate + L-cysteinyl-[protein] = S-geranylgeranyl-L-cysteinyl-[protein] + diphosphate. Functionally, essential subunit of both the farnesyltransferase and the geranylgeranyltransferase complex. Contributes to the transfer of a farnesyl or geranylgeranyl moiety from farnesyl or geranylgeranyl diphosphate to a cysteine at the fourth position from the C-terminus of several proteins having the C-terminal sequence Cys-aliphatic-aliphatic-X. The polypeptide is Protein farnesyltransferase/geranylgeranyltransferase type-1 subunit alpha (FTA) (Pisum sativum (Garden pea)).